Here is a 375-residue protein sequence, read N- to C-terminus: Tyrosine--tRNA ligase (375 aa).

L-tyrosine contacts are provided by Tyr37, Tyr168, Gln172, Asp175, and Gln190. The 'KMSKS' region motif lies at 251 to 255; that stretch reads KMSKS. An ATP-binding site is contributed by Lys254.

It belongs to the class-I aminoacyl-tRNA synthetase family. TyrS type 4 subfamily. Homodimer.

Its subcellular location is the cytoplasm. The catalysed reaction is tRNA(Tyr) + L-tyrosine + ATP = L-tyrosyl-tRNA(Tyr) + AMP + diphosphate + H(+). Catalyzes the attachment of tyrosine to tRNA(Tyr) in a two-step reaction: tyrosine is first activated by ATP to form Tyr-AMP and then transferred to the acceptor end of tRNA(Tyr). In Pyrococcus furiosus (strain ATCC 43587 / DSM 3638 / JCM 8422 / Vc1), this protein is Tyrosine--tRNA ligase.